Here is a 343-residue protein sequence, read N- to C-terminus: Methionine import ATP-binding protein MetN 3 (343 aa).

One can recognise an ABC transporter domain in the interval 2–241 (IELSNITKVF…PKTPLAQKFI (240 aa)). Position 38-45 (38-45 (GASGAGKS)) interacts with ATP.

It belongs to the ABC transporter superfamily. Methionine importer (TC 3.A.1.24) family. The complex is composed of two ATP-binding proteins (MetN), two transmembrane proteins (MetI) and a solute-binding protein (MetQ).

It is found in the cell inner membrane. The enzyme catalyses L-methionine(out) + ATP + H2O = L-methionine(in) + ADP + phosphate + H(+). The catalysed reaction is D-methionine(out) + ATP + H2O = D-methionine(in) + ADP + phosphate + H(+). Part of the ABC transporter complex MetNIQ involved in methionine import. Responsible for energy coupling to the transport system. The chain is Methionine import ATP-binding protein MetN 3 from Pectobacterium atrosepticum (strain SCRI 1043 / ATCC BAA-672) (Erwinia carotovora subsp. atroseptica).